A 354-amino-acid polypeptide reads, in one-letter code: UDP-glucose 4-epimerase 1 (354 aa).

8–39 contacts NAD(+); the sequence is TILVTGGAGYIGSHTVLQLLQLGFRVVVLDNL. S133 is a substrate binding site. Y157 acts as the Proton acceptor in catalysis.

This sequence belongs to the NAD(P)-dependent epimerase/dehydratase family. NAD(+) serves as cofactor.

It catalyses the reaction UDP-alpha-D-glucose = UDP-alpha-D-galactose. It functions in the pathway carbohydrate metabolism; galactose metabolism. Functionally, catalyzes the interconversion between UDP-glucose and UDP-galactose. The chain is UDP-glucose 4-epimerase 1 (UGE-1) from Oryza sativa subsp. japonica (Rice).